The chain runs to 284 residues: Nucleotide-binding protein Sbal195_0713 (284 aa).

8 to 15 lines the ATP pocket; it reads GRSGSGKS. Residue 56-59 coordinates GTP; it reads DVRN.

Belongs to the RapZ-like family.

In terms of biological role, displays ATPase and GTPase activities. The chain is Nucleotide-binding protein Sbal195_0713 from Shewanella baltica (strain OS195).